A 304-amino-acid chain; its full sequence is MSVVSAITVTVPATTANLGPGFDCIGAALKLYNEFRFTRLEEGGLIIHVSGTEAERVQTDESNLLYQAFVKFYQHIEQTPPTVKIEIKLGVPLARGLGSSATAIVGGLVAANQLEGATLSQSQVMELAIAMEGHPDNVVPALLGGCRLAATSGTAWEICDVPWHKDVVPVVAIPNFELSTSEARGVLPTEVSRADAIFNTAHLGLLLRGLETGNGQWLKTALQDKLHQPYRKALIPSYDAVNIAAVSAGAYGMVISGAGPTLLALADQLHSEAVEAAMLAAWQEEGITAEVRSLSLDTQGAKSF.

ATP is bound at residue 92 to 102 (PLARGLGSSAT).

This sequence belongs to the GHMP kinase family. Homoserine kinase subfamily.

Its subcellular location is the cytoplasm. The catalysed reaction is L-homoserine + ATP = O-phospho-L-homoserine + ADP + H(+). The protein operates within amino-acid biosynthesis; L-threonine biosynthesis; L-threonine from L-aspartate: step 4/5. In terms of biological role, catalyzes the ATP-dependent phosphorylation of L-homoserine to L-homoserine phosphate. This chain is Homoserine kinase, found in Nostoc punctiforme (strain ATCC 29133 / PCC 73102).